A 255-amino-acid chain; its full sequence is Aliphatic sulfonates import ATP-binding protein SsuB (255 aa).

One can recognise an ABC transporter domain in the interval 5–231 (IRVNEKAFGK…PRSRTSPVFQ (227 aa)). 39 to 46 (GPSGCGKS) contributes to the ATP binding site.

Belongs to the ABC transporter superfamily. Aliphatic sulfonates importer (TC 3.A.1.17.2) family. As to quaternary structure, the complex is composed of two ATP-binding proteins (SsuB), two transmembrane proteins (SsuC) and a solute-binding protein (SsuA).

It is found in the cell membrane. It catalyses the reaction ATP + H2O + aliphatic sulfonate-[sulfonate-binding protein]Side 1 = ADP + phosphate + aliphatic sulfonateSide 2 + [sulfonate-binding protein]Side 1.. In terms of biological role, part of the ABC transporter complex SsuABC involved in aliphatic sulfonates import. Responsible for energy coupling to the transport system. This chain is Aliphatic sulfonates import ATP-binding protein SsuB, found in Bacillus licheniformis (strain ATCC 14580 / DSM 13 / JCM 2505 / CCUG 7422 / NBRC 12200 / NCIMB 9375 / NCTC 10341 / NRRL NRS-1264 / Gibson 46).